The primary structure comprises 185 residues: MSKEVLNQTKEKMEKAVQAYGRELATVRAGRANASLLDKVTVDYYGAQTPLNQIASITVPEARMLIITPYDKTAIGDIEKSIQKSDLGITPTSDGNVIRIAIPALTEERRKELVKVVRKYSEEAKVAVRNVRRDANDELKKLEKNGEITEDELRSSTEDVQKLTDEYVAKIDDVMKDKEKEIMEV.

This sequence belongs to the RRF family.

The protein localises to the cytoplasm. Its function is as follows. Responsible for the release of ribosomes from messenger RNA at the termination of protein biosynthesis. May increase the efficiency of translation by recycling ribosomes from one round of translation to another. In Bacillus pumilus (strain SAFR-032), this protein is Ribosome-recycling factor.